We begin with the raw amino-acid sequence, 301 residues long: Probable aspartoacylase (301 aa).

The Zn(2+) site is built by histidine 13 and glutamate 16. Residues arginine 54 and asparagine 61 to arginine 62 contribute to the substrate site. Histidine 105 provides a ligand contact to Zn(2+). Residues glutamate 163 and tyrosine 273 each coordinate substrate.

This sequence belongs to the AspA/AstE family. Aspartoacylase subfamily. It depends on Zn(2+) as a cofactor.

The enzyme catalyses an N-acyl-L-aspartate + H2O = a carboxylate + L-aspartate. This is Probable aspartoacylase from Prochlorococcus marinus (strain MIT 9312).